Consider the following 464-residue polypeptide: V-type ATP synthase beta chain (464 aa).

Belongs to the ATPase alpha/beta chains family.

Its function is as follows. Produces ATP from ADP in the presence of a proton gradient across the membrane. The V-type beta chain is a regulatory subunit. The polypeptide is V-type ATP synthase beta chain (Streptococcus gordonii (strain Challis / ATCC 35105 / BCRC 15272 / CH1 / DL1 / V288)).